We begin with the raw amino-acid sequence, 694 residues long: NADPH--cytochrome P450 reductase (694 aa).

At 1-8 (MAQLDTLD) the chain is on the lumenal side. A helical membrane pass occupies residues 9 to 31 (LVVLAVLLVGSVAYFTKGTYWAV). Over 32–694 (AKDPYASTGP…RGRYQEDVWS (663 aa)) the chain is Cytoplasmic. The Flavodoxin-like domain occupies 66-220 (CVIFYGSQTG…DFLAWKEPMW (155 aa)). FMN contacts are provided by residues 72 to 77 (SQTGTA), 123 to 126 (ATYG), 168 to 177 (LGNNTYEHYN), and Asp-203. One can recognise an FAD-binding FR-type domain in the interval 276 to 537 (HNPFIAPIAE…HVRHSNFKLP (262 aa)). Arg-295 is an NADP(+) binding site. FAD-binding positions include 450 to 453 (RYYS), 468 to 470 (TAV), and 485 to 488 (GVTT). NADP(+) contacts are provided by residues Thr-551, 613–614 (SR), 619–623 (KVYVQ), and Glu-655. Position 693 (Trp-693) interacts with FAD.

This sequence belongs to the NADPH--cytochrome P450 reductase family. In the N-terminal section; belongs to the flavodoxin family. It in the C-terminal section; belongs to the flavoprotein pyridine nucleotide cytochrome reductase family. It depends on FAD as a cofactor. FMN serves as cofactor.

The protein localises to the endoplasmic reticulum membrane. The protein resides in the mitochondrion outer membrane. Its subcellular location is the cell membrane. The enzyme catalyses 2 oxidized [cytochrome P450] + NADPH = 2 reduced [cytochrome P450] + NADP(+) + H(+). This enzyme is required for electron transfer from NADP to cytochrome P450 in microsomes. It can also provide electron transfer to heme oxygenase and cytochrome B5. Involved in ergosterol biosynthesis. The protein is NADPH--cytochrome P450 reductase of Aspergillus niger.